We begin with the raw amino-acid sequence, 356 residues long: NADH-quinone oxidoreductase subunit H (356 aa).

The next 9 membrane-spanning stretches (helical) occupy residues 17–37 (TGGILLVVIWVLLSLAFLLLA), 51–71 (PNVVGPFGLLQSFADFFKFVL), 83–103 (VVFILAPLISLILAFVGWAVV), 116–136 (VGILYLLAMSSLGVYGIIMGG), 162–182 (IGLIIITVILLAGSMNLSTIV), 202–222 (LVLLPVMVVAMGMFYISALAE), 261–281 (IVLMCAMISVLFFGGWNPGFP), 295–315 (LFLALVFYAKICFWFFMFAMA), and 334–354 (VFLPTSLVLVAAVAAWRVFGP).

It belongs to the complex I subunit 1 family. In terms of assembly, NDH-1 is composed of 14 different subunits. Subunits NuoA, H, J, K, L, M, N constitute the membrane sector of the complex.

The protein localises to the cell inner membrane. It carries out the reaction a quinone + NADH + 5 H(+)(in) = a quinol + NAD(+) + 4 H(+)(out). Its function is as follows. NDH-1 shuttles electrons from NADH, via FMN and iron-sulfur (Fe-S) centers, to quinones in the respiratory chain. The immediate electron acceptor for the enzyme in this species is believed to be ubiquinone. Couples the redox reaction to proton translocation (for every two electrons transferred, four hydrogen ions are translocated across the cytoplasmic membrane), and thus conserves the redox energy in a proton gradient. This subunit may bind ubiquinone. The polypeptide is NADH-quinone oxidoreductase subunit H (Caulobacter vibrioides (strain ATCC 19089 / CIP 103742 / CB 15) (Caulobacter crescentus)).